We begin with the raw amino-acid sequence, 464 residues long: Soluble pyridine nucleotide transhydrogenase (464 aa).

Residue 35 to 44 (DSRRVVGGNC) coordinates FAD.

Belongs to the class-I pyridine nucleotide-disulfide oxidoreductase family. FAD is required as a cofactor.

The protein localises to the cytoplasm. The catalysed reaction is NAD(+) + NADPH = NADH + NADP(+). Functionally, conversion of NADPH, generated by peripheral catabolic pathways, to NADH, which can enter the respiratory chain for energy generation. This chain is Soluble pyridine nucleotide transhydrogenase, found in Pseudomonas paraeruginosa (strain DSM 24068 / PA7) (Pseudomonas aeruginosa (strain PA7)).